A 176-amino-acid polypeptide reads, in one-letter code: Siroheme decarboxylase alpha subunit (176 aa).

Residues 1 to 24 (MTEAHNACCHPSGTAAGHHGAGKA) form a disordered region. Low complexity predominate over residues 12–24 (SGTAAGHHGAGKA).

It belongs to the Ahb/Nir family. Forms a heterodimer composed of AhbA and AhbB. Also forms heterotetramers.

The catalysed reaction is siroheme + 2 H(+) = 12,18-didecarboxysiroheme + 2 CO2. Its pathway is porphyrin-containing compound metabolism; protoheme biosynthesis. Functionally, involved in siroheme-dependent heme b biosynthesis. Catalyzes the decarboxylation of siroheme into didecarboxysiroheme. This Nitratidesulfovibrio vulgaris (strain ATCC 29579 / DSM 644 / CCUG 34227 / NCIMB 8303 / VKM B-1760 / Hildenborough) (Desulfovibrio vulgaris) protein is Siroheme decarboxylase alpha subunit.